Consider the following 629-residue polypeptide: 1-deoxy-D-xylulose-5-phosphate synthase (629 aa).

Thiamine diphosphate is bound by residues histidine 78 and alanine 119–serine 121. Aspartate 150 is a binding site for Mg(2+). Residues glycine 151–alanine 152, asparagine 179, tyrosine 286, and glutamate 368 contribute to the thiamine diphosphate site. Asparagine 179 serves as a coordination point for Mg(2+).

This sequence belongs to the transketolase family. DXPS subfamily. Homodimer. Mg(2+) is required as a cofactor. Thiamine diphosphate serves as cofactor.

It catalyses the reaction D-glyceraldehyde 3-phosphate + pyruvate + H(+) = 1-deoxy-D-xylulose 5-phosphate + CO2. It functions in the pathway metabolic intermediate biosynthesis; 1-deoxy-D-xylulose 5-phosphate biosynthesis; 1-deoxy-D-xylulose 5-phosphate from D-glyceraldehyde 3-phosphate and pyruvate: step 1/1. Catalyzes the acyloin condensation reaction between C atoms 2 and 3 of pyruvate and glyceraldehyde 3-phosphate to yield 1-deoxy-D-xylulose-5-phosphate (DXP). The sequence is that of 1-deoxy-D-xylulose-5-phosphate synthase from Acidovorax ebreus (strain TPSY) (Diaphorobacter sp. (strain TPSY)).